The following is a 461-amino-acid chain: Proline--tRNA ligase (461 aa).

The protein belongs to the class-II aminoacyl-tRNA synthetase family. ProS type 3 subfamily. In terms of assembly, homodimer.

Its subcellular location is the cytoplasm. The enzyme catalyses tRNA(Pro) + L-proline + ATP = L-prolyl-tRNA(Pro) + AMP + diphosphate. Functionally, catalyzes the attachment of proline to tRNA(Pro) in a two-step reaction: proline is first activated by ATP to form Pro-AMP and then transferred to the acceptor end of tRNA(Pro). The polypeptide is Proline--tRNA ligase (Methanococcus vannielii (strain ATCC 35089 / DSM 1224 / JCM 13029 / OCM 148 / SB)).